Reading from the N-terminus, the 2327-residue chain is Nonribosomal peptide synthetase apmB (2327 aa).

The segment at 214 to 605 (DTQAKSRPDS…GRKDMQIKLR (392 aa)) is adenylation 1. Positions 734-810 (EPATATGKVL…EMADACTKVI (77 aa)) constitute a Carrier 1 domain. Residue Ser-771 is modified to O-(pantetheine 4'-phosphoryl)serine. The tract at residues 845–1259 (EDLYPCTAMQ…IFISSKDQES (415 aa)) is condensation 1. An adenylation 2 region spans residues 1281-1675 (ERIAERPDHE…RRKDTQVKLR (395 aa)). The 77-residue stretch at 1816-1892 (PPTTDMQITM…AISAVAETLS (77 aa)) folds into the Carrier 2 domain. An O-(pantetheine 4'-phosphoryl)serine modification is found at Ser-1853. Positions 1937–2260 (TDFQSLAING…VFQYQDFGGE (324 aa)) are condensation 2. The tract at residues 2299-2327 (RVDLPRRPSPAGDTRDGPTAASDSPSRAR) is disordered.

This sequence belongs to the NRP synthetase family.

It carries out the reaction N-benzoyl-L-phenylalaninol + benzoate + L-phenylalanine + 2 ATP = asperphenamate + 2 AMP + 2 diphosphate + H(+). Its pathway is secondary metabolite biosynthesis. In terms of biological role, nonribosomal peptide synthetase; part of the gene cluster that mediates the biosynthesis of asperphenamate, a rare linear amino acid ester that exhibits antitumor activity towards a number of cell lines. The structure of asperphenamate contains two subunits, N-benzoylphenylalanine and N-benzoylphenylalaninol, which are connected by an inter-molecular ester bond. The first step of asperphenamate biosynthesis is the generation of N-benzoylphenylalaninol by the nonribosomal peptide synthase apmA. Using phenylalanine and benzoic acid as substrates, apmA catalyzes amide bond formation and tethers the intermediate into the NRPS chain. Then, the terminal R domain of apmA catalyzes the reduction reaction to get the shunt product N-benzoylphenylalaninol. Subsequently, the nonribosomal peptide synthase apmB activates the same substrates as does apmA (phenylalanine and benzoic acid) to produce N-benzoylphenylalanine before condensing N-benzoylphenylalanine and N-benzoylphenylalaninol to release asperphenamate. In Penicillium brevicompactum, this protein is Nonribosomal peptide synthetase apmB.